We begin with the raw amino-acid sequence, 214 residues long: Adenylate kinase (214 aa).

Position 10–15 (10–15) interacts with ATP; it reads GAGKGT. The NMP stretch occupies residues 30–59; the sequence is STGDMLRAAIKAGTELGKQAKAVIDAGQLV. Residues T31, R36, 57–59, 85–88, and Q92 each bind AMP; these read QLV and GFPR. The LID stretch occupies residues 122–159; the sequence is GRRAHLPSGRTYHVVYNPPKVEGKDDVTGEDLVVRDDD. ATP is bound by residues R123 and 132–133; that span reads TY. Residues R156 and R167 each coordinate AMP. ATP is bound at residue K200.

It belongs to the adenylate kinase family. Monomer.

It localises to the cytoplasm. The enzyme catalyses AMP + ATP = 2 ADP. It participates in purine metabolism; AMP biosynthesis via salvage pathway; AMP from ADP: step 1/1. Its function is as follows. Catalyzes the reversible transfer of the terminal phosphate group between ATP and AMP. Plays an important role in cellular energy homeostasis and in adenine nucleotide metabolism. This Vibrio vulnificus (strain YJ016) protein is Adenylate kinase.